The chain runs to 216 residues: Uracil phosphoribosyltransferase (216 aa).

30–34 lines the GTP pocket; that stretch reads KNLVR. 5-phospho-alpha-D-ribose 1-diphosphate contacts are provided by residues Arg80, Arg105, and 140-148; that span reads DPMIATAST. Residues Ile203 and 208–210 each bind uracil; that span reads GDA. Residue Asp209 coordinates 5-phospho-alpha-D-ribose 1-diphosphate.

The protein belongs to the UPRTase family. It depends on Mg(2+) as a cofactor.

The catalysed reaction is UMP + diphosphate = 5-phospho-alpha-D-ribose 1-diphosphate + uracil. Its pathway is pyrimidine metabolism; UMP biosynthesis via salvage pathway; UMP from uracil: step 1/1. Allosterically activated by GTP. In terms of biological role, catalyzes the conversion of uracil and 5-phospho-alpha-D-ribose 1-diphosphate (PRPP) to UMP and diphosphate. The chain is Uracil phosphoribosyltransferase from Saccharolobus islandicus (strain Y.N.15.51 / Yellowstone #2) (Sulfolobus islandicus).